The primary structure comprises 504 residues: Splicing factor SF3a60 homolog (504 aa).

An N-acetylserine modification is found at S2. 2 disordered regions span residues 293–319 (DKKHFARPPHNGKQNGDAKSTHESENA) and 355–374 (YEEMEGEREGEEANTELESD). Residues 356 to 374 (EEMEGEREGEEANTELESD) are compositionally biased toward acidic residues. S373 bears the Phosphoserine mark. The Matrin-type zinc finger occupies 409-440 (FKCEICGNYSYWGRRAFERHFKEWRHQHGMRC).

This sequence belongs to the SF3A3 family. As to expression, expressed at moderate levels in all sporophytic tissues with strongest expression in gametophytes.

The protein localises to the nucleus. Its function is as follows. Splicing factor homolog to SF3a60 that may be involved in pre-spliceosome formation. Is necessary for gametic cell fate determination. In Arabidopsis thaliana (Mouse-ear cress), this protein is Splicing factor SF3a60 homolog.